The primary structure comprises 86 residues: MALLITKKCINCDMCEPECPNEAISMGDHIYEINSDKCTECVGHYETPTCQKVCPIPNTIVKDPAHVETEEQLWDKFVLMHHADKI.

2 4Fe-4S ferredoxin-type domains span residues 1–29 (MALL…MGDH) and 31–65 (YEIN…KDPA). Residues Cys-9, Cys-12, Cys-15, Cys-19, Cys-38, Cys-41, Cys-50, and Cys-54 each contribute to the [4Fe-4S] cluster site.

[4Fe-4S] cluster is required as a cofactor.

Its function is as follows. Ferredoxins are iron-sulfur proteins that transfer electrons in a wide variety of metabolic reactions. This is Ferredoxin YfhL (yfhL) from Escherichia coli (strain K12).